Here is a 258-residue protein sequence, read N- to C-terminus: Mediator of RNA polymerase II transcription subunit 7 (258 aa).

2 disordered regions span residues 1–39 (MLPGFGATQTVSPFPNPPEYASAYTSDRIDNGSAPPPPH) and 202–243 (EKET…PPSV). The segment covering 203–217 (KETEEDEEMKEDDEE) has biased composition (acidic residues). Polar residues predominate over residues 220–229 (STSSSEGNQK).

This sequence belongs to the Mediator complex subunit 7 family. Component of the Mediator complex.

The protein localises to the nucleus. Functionally, component of the Mediator complex, a coactivator involved in the regulated transcription of nearly all RNA polymerase II-dependent genes. Mediator functions as a bridge to convey information from gene-specific regulatory proteins to the basal RNA polymerase II transcription machinery. Mediator is recruited to promoters by direct interactions with regulatory proteins and serves as a scaffold for the assembly of a functional preinitiation complex with RNA polymerase II and the general transcription factors. The protein is Mediator of RNA polymerase II transcription subunit 7 (let-49) of Caenorhabditis briggsae.